Here is a 206-residue protein sequence, read N- to C-terminus: Large ribosomal subunit protein bL25 (206 aa).

The protein belongs to the bacterial ribosomal protein bL25 family. CTC subfamily. As to quaternary structure, part of the 50S ribosomal subunit; part of the 5S rRNA/L5/L18/L25 subcomplex. Contacts the 5S rRNA. Binds to the 5S rRNA independently of L5 and L18.

This is one of the proteins that binds to the 5S RNA in the ribosome where it forms part of the central protuberance. This chain is Large ribosomal subunit protein bL25, found in Paraburkholderia phytofirmans (strain DSM 17436 / LMG 22146 / PsJN) (Burkholderia phytofirmans).